We begin with the raw amino-acid sequence, 424 residues long: uncharacterized protein (424 aa).

The protein belongs to the serpin family.

This is an uncharacterized protein from Methanosarcina acetivorans (strain ATCC 35395 / DSM 2834 / JCM 12185 / C2A).